A 230-amino-acid chain; its full sequence is UPF0688 protein C1orf174 homolog (230 aa).

Disordered regions lie at residues 1 to 85 (MRSR…SLPK) and 97 to 166 (AEDS…VRAS). Over residues 11 to 30 (RSSARLRARSYSSASLASAR) the composition is skewed to low complexity. Polar residues predominate over residues 31–48 (DVTSSTSAKTTCLASSSH). Basic and acidic residues predominate over residues 49–78 (KATDRRTSKKFKYDKGHLVKAELQKLDPKS). Phosphoserine is present on serine 180.

It belongs to the UPF0688 family.

The protein localises to the nucleus. This is UPF0688 protein C1orf174 homolog from Mus musculus (Mouse).